We begin with the raw amino-acid sequence, 239 residues long: 1-(5-phosphoribosyl)-5-[(5-phosphoribosylamino)methylideneamino] imidazole-4-carboxamide isomerase (239 aa).

D8 acts as the Proton acceptor in catalysis. Residue D129 is the Proton donor of the active site.

This sequence belongs to the HisA/HisF family.

The protein localises to the cytoplasm. The catalysed reaction is 1-(5-phospho-beta-D-ribosyl)-5-[(5-phospho-beta-D-ribosylamino)methylideneamino]imidazole-4-carboxamide = 5-[(5-phospho-1-deoxy-D-ribulos-1-ylimino)methylamino]-1-(5-phospho-beta-D-ribosyl)imidazole-4-carboxamide. It functions in the pathway amino-acid biosynthesis; L-histidine biosynthesis; L-histidine from 5-phospho-alpha-D-ribose 1-diphosphate: step 4/9. This chain is 1-(5-phosphoribosyl)-5-[(5-phosphoribosylamino)methylideneamino] imidazole-4-carboxamide isomerase, found in Cereibacter sphaeroides (strain ATCC 17025 / ATH 2.4.3) (Rhodobacter sphaeroides).